The sequence spans 231 residues: Glutathione-specific gamma-glutamylcyclotransferase (231 aa).

A substrate-binding site is contributed by 49–54; that stretch reads IFGYGS. Glu127 functions as the Proton acceptor in the catalytic mechanism.

The protein belongs to the gamma-glutamylcyclotransferase family. ChaC subfamily.

The catalysed reaction is glutathione = L-cysteinylglycine + 5-oxo-L-proline. Catalyzes the cleavage of glutathione into 5-oxo-L-proline and a Cys-Gly dipeptide. Acts specifically on glutathione, but not on other gamma-glutamyl peptides. The chain is Glutathione-specific gamma-glutamylcyclotransferase from Escherichia coli (strain K12).